The sequence spans 343 residues: Aspartate-semialdehyde dehydrogenase (343 aa).

11-14 (TGMV) contributes to the NADP(+) binding site. R109 provides a ligand contact to phosphate. The Acyl-thioester intermediate role is filled by C148. Q174 provides a ligand contact to substrate. 177-178 (SG) is a binding site for NADP(+). E200 is a binding site for substrate. K203 contacts phosphate. R233 lines the substrate pocket. H240 (proton acceptor) is an active-site residue. 321–322 (NT) serves as a coordination point for NADP(+).

It belongs to the aspartate-semialdehyde dehydrogenase family. In terms of assembly, homodimer.

The catalysed reaction is L-aspartate 4-semialdehyde + phosphate + NADP(+) = 4-phospho-L-aspartate + NADPH + H(+). The protein operates within amino-acid biosynthesis; L-lysine biosynthesis via DAP pathway; (S)-tetrahydrodipicolinate from L-aspartate: step 2/4. It functions in the pathway amino-acid biosynthesis; L-methionine biosynthesis via de novo pathway; L-homoserine from L-aspartate: step 2/3. Its pathway is amino-acid biosynthesis; L-threonine biosynthesis; L-threonine from L-aspartate: step 2/5. Its function is as follows. Catalyzes the NADPH-dependent formation of L-aspartate-semialdehyde (L-ASA) by the reductive dephosphorylation of L-aspartyl-4-phosphate. The chain is Aspartate-semialdehyde dehydrogenase from Archaeoglobus fulgidus (strain ATCC 49558 / DSM 4304 / JCM 9628 / NBRC 100126 / VC-16).